Consider the following 84-residue polypeptide: ATP synthase subunit c (84 aa).

Transmembrane regions (helical) follow at residues 9 to 29 (IIAS…GFAI) and 54 to 74 (IVAG…LLFI).

Belongs to the ATPase C chain family. F-type ATPases have 2 components, F(1) - the catalytic core - and F(0) - the membrane proton channel. F(1) has five subunits: alpha(3), beta(3), gamma(1), delta(1), epsilon(1). F(0) has three main subunits: a(1), b(2) and c(10-14). The alpha and beta chains form an alternating ring which encloses part of the gamma chain. F(1) is attached to F(0) by a central stalk formed by the gamma and epsilon chains, while a peripheral stalk is formed by the delta and b chains.

Its subcellular location is the cell inner membrane. Functionally, f(1)F(0) ATP synthase produces ATP from ADP in the presence of a proton or sodium gradient. F-type ATPases consist of two structural domains, F(1) containing the extramembraneous catalytic core and F(0) containing the membrane proton channel, linked together by a central stalk and a peripheral stalk. During catalysis, ATP synthesis in the catalytic domain of F(1) is coupled via a rotary mechanism of the central stalk subunits to proton translocation. Key component of the F(0) channel; it plays a direct role in translocation across the membrane. A homomeric c-ring of between 10-14 subunits forms the central stalk rotor element with the F(1) delta and epsilon subunits. This is ATP synthase subunit c from Pasteurella multocida (strain Pm70).